Here is an 837-residue protein sequence, read N- to C-terminus: Enterin neuropeptides (837 aa).

A signal peptide spans 1–25 (MAKHDVTVMTLLLVVCALHVFDAQG). Positions 26–47 (TDVKLNDGFLRSGIMNIPFQRR) are excised as a propeptide. V57 is modified (valine amide). A propeptide spanning residues 61–134 (SGFQSPVSPS…ENKRFSKENE (74 aa)) is cleaved from the precursor. V146 carries the post-translational modification Valine amide. Positions 150-178 (MDLSALEKELIAKLKAADLLSPLETEAPG) are excised as a propeptide. L190 carries the post-translational modification Leucine amide. A propeptide spanning residues 194–201 (MPVDVFPR) is cleaved from the precursor. The residue at position 211 (V211) is a Valine amide. Positions 215–234 (SGNGENYFDDLDTFGDISQR) are excised as a propeptide. V244 is subject to Valine amide. A propeptide spanning residues 248-266 (GNTDFSRNPLARLSQVQNR) is cleaved from the precursor. V276 carries the valine amide modification. Positions 280 to 285 (SVHNIV) are excised as a propeptide. At V297 the chain carries Valine amide. Positions 301–325 (DFEDASEGLDEEEGDIDGYSDDLDV) are excised as a propeptide. 18 positions are modified to valine amide: V336, V348, V360, V372, V384, V396, V408, V420, V432, V444, V456, V468, V480, V492, V504, V516, V528, and V540. A propeptide spanning residues 544-595 (ELGEDEINFLKEVDAADISRQLAEEDEKEAMVSVDDKETLSNEEDASEDDFE) is cleaved from the precursor. The disordered stretch occupies residues 567-594 (EEDEKEAMVSVDDKETLSNEEDASEDDF). The span at 584 to 593 (SNEEDASEDD) shows a compositional bias: acidic residues. E598 is subject to Pyrrolidone carboxylic acid (Glu); in form ENl'. Residue V606 is modified to Valine amide. Positions 610 to 627 (DEEGDMGVEMEEEMESEK) are excised as a propeptide. The residue at position 637 (L637) is a Leucine amide. A Pyrrolidone carboxylic acid modification is found at Q641. V649 is modified (valine amide). The residue at position 653 (Q653) is a Pyrrolidone carboxylic acid. Valine amide is present on residues V661 and V673. Position 677 is a pyrrolidone carboxylic acid (Q677). V685 and V697 each carry valine amide. Q701 carries the post-translational modification Pyrrolidone carboxylic acid. The residue at position 709 (V709) is a Valine amide. Position 713 is a pyrrolidone carboxylic acid (Q713). V721 is modified (valine amide). Q725 is modified (pyrrolidone carboxylic acid). A Valine amide modification is found at V733. A propeptide spanning residues 734–837 (GKRSGAEDID…DSHIMATSST (104 aa)) is cleaved from the precursor. Residues 772-837 (GQPAAANEEE…DSHIMATSST (66 aa)) form a disordered region. Acidic residues predominate over residues 778–791 (NEEELQQEAAEESE).

High expression in gut and CNS.

The protein resides in the secreted. Its function is as follows. Reduce interneurons B4/5 activity. May play a regulatory role in nonfeeding behaviors. This is Enterin neuropeptides (ENPP) from Aplysia californica (California sea hare).